Consider the following 260-residue polypeptide: Late transcription factor 1 (260 aa).

The protein belongs to the chordopoxvirinae VLTF-1 family. As to quaternary structure, interacts with the late transcription factors VLTF-2 and VLTF-3. Interacts with the late transcription elongation factor VLTF-4. Interacts with itself.

In terms of biological role, associates with RNA polymerase to initiate transcription from late gene promoters. In Homo sapiens (Human), this protein is Late transcription factor 1 (OPG093).